Consider the following 61-residue polypeptide: Metallothionein-II, hippocampal (61 aa).

Met-1 is subject to N-acetylmethionine. The segment at 1–29 (MDPNCSCATGGSCTCANSCTCKACKCASC) is beta. A divalent metal cation-binding residues include Cys-5, Cys-7, Cys-13, Cys-15, Cys-19, Cys-21, Cys-24, Cys-26, Cys-29, Cys-33, Cys-34, Cys-36, Cys-37, Cys-41, Cys-44, Cys-48, Cys-50, Cys-57, Cys-59, and Cys-60. Residues 30-61 (KKSCCSCCPVGCAKCAQGCICKGASDKCSCCA) are alpha.

It belongs to the metallothionein superfamily. Type 1 family.

Metallothioneins have a high content of cysteine residues that bind various heavy metals; these proteins are transcriptionally regulated by both heavy metals and glucocorticoids. This isoform may play a role in regulating the transport, accumulation, and compartmentation of zinc in the hippocampus. This chain is Metallothionein-II, hippocampal, found in Bos taurus (Bovine).